We begin with the raw amino-acid sequence, 501 residues long: Dye-decolorizing peroxidase (501 aa).

An N-terminal signal peptide occupies residues 1 to 21 (MRLSPSFLSLALVIFVGEVVA). The propeptide occupies 22-60 (RNVVARASNPASVTGTRKVSLLKNVAGLPAVPTAQQVAV). The active-site Proton acceptor is the D228. N352 is a glycosylation site (N-linked (GlcNAc...) asparagine). A heme-binding site is contributed by H367. The N-linked (GlcNAc...) asparagine glycan is linked to N403.

Belongs to the DyP-type peroxidase family. Heme b is required as a cofactor.

Its subcellular location is the secreted. The catalysed reaction is Reactive Blue 5 + 2 H2O2 = 2,2'-disulfonyl azobenzene + 3-[(4-amino-6-chloro-1,3,5-triazin-2-yl)amino]benzenesulfonate + phthalate + 2 H2O + 2 H(+). The enzyme catalyses 2 a phenolic donor + H2O2 = 2 a phenolic radical donor + 2 H2O. Functionally, manganese-independent peroxidase that is able to convert a large number of compounds, but its physiological substrate is not known. In addition to classic peroxidase substrates (e.g. 2,6-dimethoxyphenol), oxidizes dyes such as Reactive Blue 5 and Reactive Black 5. The chain is Dye-decolorizing peroxidase from Exidia glandulosa (Black witch's butter).